Reading from the N-terminus, the 284-residue chain is Tropomyosin (284 aa).

Residues 1–284 (MDAIKKKMLA…DQTFAELAGY (284 aa)) are a coiled coil. The span at 202-213 (NNTKSLEISEQE) shows a compositional bias: polar residues. Positions 202–223 (NNTKSLEISEQEASQREDSYEE) are disordered. Over residues 214 to 223 (ASQREDSYEE) the composition is skewed to basic and acidic residues.

This sequence belongs to the tropomyosin family. Homodimer.

In terms of biological role, tropomyosin, in association with the troponin complex, plays a central role in the calcium dependent regulation of muscle contraction. The sequence is that of Tropomyosin from Haliotis rufescens (California red abalone).